Here is a 397-residue protein sequence, read N- to C-terminus: 3-ketoacyl-CoA thiolase, mitochondrial (397 aa).

The transit peptide at 1 to 16 (MALLRGVFVVAAKRTP) directs the protein to the mitochondrion; not cleaved. The residue at position 25 (Lys25) is an N6-acetyllysine; alternate. Lys25 is modified (N6-succinyllysine; alternate). Residue Lys45 is modified to N6-succinyllysine. Cys92 (acyl-thioester intermediate) is an active-site residue. A Phosphothreonine modification is found at Thr119. Phosphoserine is present on Ser121. Tyr127 carries the post-translational modification Phosphotyrosine. Thr136 is modified (phosphothreonine). Lys137 carries the N6-acetyllysine; alternate modification. Lys137 is subject to N6-succinyllysine; alternate. Ser140 bears the Phosphoserine mark. An N6-acetyllysine; alternate mark is found at Lys143, Lys171, Lys191, and Lys209. Residues Lys143, Lys171, Lys191, and Lys209 each carry the N6-succinyllysine; alternate modification. 3 positions are modified to N6-succinyllysine: Lys211, Lys212, and Lys214. The CoA site is built by Arg224 and Thr227. Lys234 is subject to N6-acetyllysine; alternate. Lys234 is subject to N6-succinyllysine; alternate. At Lys240 the chain carries N6-succinyllysine. Lys241 is modified (N6-acetyllysine). Ser251 serves as a coordination point for CoA. Lys269 and Lys270 each carry N6-acetyllysine. Lys305 carries the N6-acetyllysine; alternate modification. Lys305 carries the N6-succinyllysine; alternate modification. Ser310 is modified (phosphoserine). Lys312 carries the N6-acetyllysine; alternate modification. Lys312 is subject to N6-succinyllysine; alternate. Phosphoserine is present on Ser333. An N6-acetyllysine mark is found at Lys340 and Lys375. Catalysis depends on Cys382, which acts as the Proton donor/acceptor.

Belongs to the thiolase-like superfamily. Thiolase family. As to quaternary structure, homotetramer. Interacts with BNIP3.

The protein localises to the mitochondrion. It carries out the reaction an acyl-CoA + acetyl-CoA = a 3-oxoacyl-CoA + CoA. The enzyme catalyses 2 acetyl-CoA = acetoacetyl-CoA + CoA. The catalysed reaction is acetyl-CoA + H2O = acetate + CoA + H(+). It catalyses the reaction propanoyl-CoA + H2O = propanoate + CoA + H(+). It carries out the reaction butanoyl-CoA + H2O = butanoate + CoA + H(+). The enzyme catalyses hexanoyl-CoA + H2O = hexanoate + CoA + H(+). The catalysed reaction is octanoyl-CoA + H2O = octanoate + CoA + H(+). It catalyses the reaction decanoyl-CoA + H2O = decanoate + CoA + H(+). It carries out the reaction dodecanoyl-CoA + H2O = dodecanoate + CoA + H(+). The enzyme catalyses tetradecanoyl-CoA + H2O = tetradecanoate + CoA + H(+). The catalysed reaction is hexadecanoyl-CoA + H2O = hexadecanoate + CoA + H(+). It participates in lipid metabolism; fatty acid beta-oxidation. Functionally, in the production of energy from fats, this is one of the enzymes that catalyzes the last step of the mitochondrial beta-oxidation pathway, an aerobic process breaking down fatty acids into acetyl-CoA. Using free coenzyme A/CoA, catalyzes the thiolytic cleavage of medium- to long-chain unbranched 3-oxoacyl-CoAs into acetyl-CoA and a fatty acyl-CoA shortened by two carbon atoms. Also catalyzes the condensation of two acetyl-CoA molecules into acetoacetyl-CoA and could be involved in the production of ketone bodies. Also displays hydrolase activity on various fatty acyl-CoAs. Thereby, could be responsible for the production of acetate in a side reaction to beta-oxidation. Abolishes BNIP3-mediated apoptosis and mitochondrial damage. This chain is 3-ketoacyl-CoA thiolase, mitochondrial (ACAA2), found in Homo sapiens (Human).